A 613-amino-acid chain; its full sequence is AP-5 complex subunit mu (613 aa).

Positions K309–V563 constitute an MHD domain. The segment at S501–E522 is disordered. Residues G511 to A521 show a composition bias toward acidic residues.

The protein belongs to the adaptor complexes medium subunit family. Probably part of the adaptor protein complex 5 (AP-5).

It localises to the cytoplasmic vesicle membrane. In Arabidopsis thaliana (Mouse-ear cress), this protein is AP-5 complex subunit mu (AP5M).